A 486-amino-acid chain; its full sequence is Ribulose bisphosphate carboxylase large chain (486 aa).

A propeptide spanning residues 1-2 is cleaved from the precursor; it reads MS. Substrate contacts are provided by Asn-123 and Thr-173. Lys-175 acts as the Proton acceptor in catalysis. Residue Lys-177 coordinates substrate. Mg(2+) contacts are provided by Lys-201, Asp-203, and Glu-204. Lys-201 is modified (N6-carboxylysine). Phosphoserine is present on Ser-208. His-294 (proton acceptor) is an active-site residue. Residues Arg-295 and His-327 each coordinate substrate. The residue at position 330 (Thr-330) is a Phosphothreonine. Residue Ser-379 participates in substrate binding.

This sequence belongs to the RuBisCO large chain family. Type I subfamily. As to quaternary structure, heterohexadecamer of 8 large chains and 8 small chains; disulfide-linked. The disulfide link is formed within the large subunit homodimers. Mg(2+) is required as a cofactor. Post-translationally, the disulfide bond which can form in the large chain dimeric partners within the hexadecamer appears to be associated with oxidative stress and protein turnover.

It localises to the plastid. The protein resides in the chloroplast. It catalyses the reaction 2 (2R)-3-phosphoglycerate + 2 H(+) = D-ribulose 1,5-bisphosphate + CO2 + H2O. The catalysed reaction is D-ribulose 1,5-bisphosphate + O2 = 2-phosphoglycolate + (2R)-3-phosphoglycerate + 2 H(+). RuBisCO catalyzes two reactions: the carboxylation of D-ribulose 1,5-bisphosphate, the primary event in carbon dioxide fixation, as well as the oxidative fragmentation of the pentose substrate in the photorespiration process. Both reactions occur simultaneously and in competition at the same active site. This chain is Ribulose bisphosphate carboxylase large chain, found in Aethionema grandiflorum (Persian stone-cress).